A 353-amino-acid polypeptide reads, in one-letter code: Photosystem II D2 protein (353 aa).

T2 is modified (N-acetylthreonine). A Phosphothreonine modification is found at T2. Residues 41-61 (CAYFALGGWFTGTTFVTSWYT) traverse the membrane as a helical segment. H118 contacts chlorophyll a. A helical transmembrane segment spans residues 125–141 (GFMLRQFELARSVQLRP). Residues Q130 and N143 each coordinate pheophytin a. Residues 153-166 (VFVSVFLIYPLGQS) form a helical membrane-spanning segment. H198 provides a ligand contact to chlorophyll a. A helical transmembrane segment spans residues 208-228 (AALLCAIHGATVENTLFEDGD). A plastoquinone contacts are provided by H215 and F262. H215 serves as a coordination point for Fe cation. A Fe cation-binding site is contributed by H269. Residues 279-295 (GLWMSAIGVVGLALNLR) form a helical membrane-spanning segment.

Belongs to the reaction center PufL/M/PsbA/D family. As to quaternary structure, PSII is composed of 1 copy each of membrane proteins PsbA, PsbB, PsbC, PsbD, PsbE, PsbF, PsbH, PsbI, PsbJ, PsbK, PsbL, PsbM, PsbT, PsbX, PsbY, PsbZ, Psb30/Ycf12, at least 3 peripheral proteins of the oxygen-evolving complex and a large number of cofactors. It forms dimeric complexes. The D1/D2 heterodimer binds P680, chlorophylls that are the primary electron donor of PSII, and subsequent electron acceptors. It shares a non-heme iron and each subunit binds pheophytin, quinone, additional chlorophylls, carotenoids and lipids. There is also a Cl(-1) ion associated with D1 and D2, which is required for oxygen evolution. The PSII complex binds additional chlorophylls, carotenoids and specific lipids. serves as cofactor.

The protein resides in the plastid. The protein localises to the chloroplast thylakoid membrane. It catalyses the reaction 2 a plastoquinone + 4 hnu + 2 H2O = 2 a plastoquinol + O2. Its function is as follows. Photosystem II (PSII) is a light-driven water:plastoquinone oxidoreductase that uses light energy to abstract electrons from H(2)O, generating O(2) and a proton gradient subsequently used for ATP formation. It consists of a core antenna complex that captures photons, and an electron transfer chain that converts photonic excitation into a charge separation. The D1/D2 (PsbA/PsbD) reaction center heterodimer binds P680, the primary electron donor of PSII as well as several subsequent electron acceptors. D2 is needed for assembly of a stable PSII complex. This is Photosystem II D2 protein from Welwitschia mirabilis (Tree tumbo).